A 79-amino-acid chain; its full sequence is MAGGRRGGRAKRRKVCYFTSNGITHIDYKDVDLLKKFVSERGKILPRRVTGTNAKYQRKLTAAIKRARQMALLPYVSGE.

This sequence belongs to the bacterial ribosomal protein bS18 family. In terms of assembly, part of the 30S ribosomal subunit. Forms a tight heterodimer with protein bS6.

In terms of biological role, binds as a heterodimer with protein bS6 to the central domain of the 16S rRNA, where it helps stabilize the platform of the 30S subunit. The chain is Small ribosomal subunit protein bS18 (rpsR) from Bacillus subtilis (strain 168).